Reading from the N-terminus, the 531-residue chain is Cytochrome P450 monooxygenase ffsD (531 aa).

The chain crosses the membrane as a helical span at residues 40-60; it reads VGALLGISLSVVLLLWVISVV. C475 is a heme binding site.

This sequence belongs to the cytochrome P450 family. Requires heme as cofactor.

It localises to the membrane. Its pathway is mycotoxin biosynthesis. Its function is as follows. Cytochrome P450 monooxygenase; part of the gene cluster that mediates the biosynthesis of the cytotoxic leucine-containing cytochalasans, including aspochalasin C, aspochalasin E, TMC-169, flavichalasine F, aspergillin PZ, aspochalasin M and flavichalasine G. The first step in the pathway is catalyzed by the hybrid PKS-NRPS ffsA that utilizes 8 units of malonyl-CoA to iteratively assemble the octaketide chain before addition of L-leucine by the C-terminal NRPS modules. Because ffsA lacks a designated enoylreductase (ER) domain, the required activity is provided the enoyl reductase fssC. The methyltransferase (MT) domain of ffsA catalyzes the alpha-methylation at C10 and C14 using S-adenosyl-L-methionine as the methyl-donating cosubstrate. Reduction by the hydrolyase ffsE, followed by dehydration and intra-molecular Diels-Alder cyclization by the Diels-Alderase ffsF then yield the required isoindolone-fused macrocycle. A number of oxidative steps catalyzed by the tailoring cytochrome P450 monooxygenase ffsD, the FAD-linked oxidoreductase ffsJ and the short-chain dehydrogenase/reductase ffsI, are further required to afford the final products. This Aspergillus flavipes protein is Cytochrome P450 monooxygenase ffsD.